The following is a 105-amino-acid chain: MAFWLQAASLLVLLALSPGVDAAAAQHLCGSHLVDALYLVCGEKGFFYTPKRDVDPLIGFLSPKSAKENEEYPFKDQTEMMVKRGIVEQCCHKPCNIFDLQNYCN.

A signal peptide spans 1 to 22 (MAFWLQAASLLVLLALSPGVDA). 3 disulfide bridges follow: Cys-29-Cys-91, Cys-41-Cys-104, and Cys-90-Cys-95. Residues 53-82 (DVDPLIGFLSPKSAKENEEYPFKDQTEMMV) constitute a propeptide, c peptide.

The protein belongs to the insulin family. As to quaternary structure, heterodimer of a B chain and an A chain linked by two disulfide bonds.

Its subcellular location is the secreted. In terms of biological role, insulin decreases blood glucose concentration. It increases cell permeability to monosaccharides, amino acids and fatty acids. It accelerates glycolysis, the pentose phosphate cycle, and glycogen synthesis in liver. The chain is Insulin (ins) from Oncorhynchus keta (Chum salmon).